Reading from the N-terminus, the 735-residue chain is ATP-dependent DNA helicase Hel308 (735 aa).

Residues Q32 and 50–57 (APTGSGKT) contribute to the ATP site. The Helicase ATP-binding domain maps to 37-201 (QAGVEKGENL…WIGGKIVESS (165 aa)). The short motif at 146 to 149 (DEIH) is the DEAH box element. The region spanning 235–431 (DLDLAAEAIE…GLRGLRHFIL (197 aa)) is the Helicase C-terminal domain.

The protein belongs to the helicase family. Hel308 subfamily. In terms of assembly, monomer.

It catalyses the reaction Couples ATP hydrolysis with the unwinding of duplex DNA by translocating in the 3'-5' direction.. It carries out the reaction ATP + H2O = ADP + phosphate + H(+). DNA-dependent ATPase and 3'-5' DNA helicase that may be involved in repair of stalled replication forks. The sequence is that of ATP-dependent DNA helicase Hel308 from Aeropyrum pernix (strain ATCC 700893 / DSM 11879 / JCM 9820 / NBRC 100138 / K1).